The following is a 346-amino-acid chain: RNA-directed DNA methylation 4 (346 aa).

Met1 carries the N-acetylmethionine modification. 3 stretches are compositionally biased toward acidic residues: residues 253–268, 278–312, and 323–332; these read FCDG…EDSN, PEEE…DDEE, and GDDEFDDYAE. A disordered region spans residues 253 to 346; it reads FCDGSDESDY…YSESDEEFES (94 aa).

This sequence belongs to the IWR1/SLC7A6OS family. Interacts with NRPD1. Associates with Pol II and Pol V complexes.

Its function is as follows. Probable regulatory factor for several RNA polymerases. Effector involved in facilitation of Pol V transcription as RNA scaffold and recruitment of silencing complex to target genomic sites. This is RNA-directed DNA methylation 4 (RDM4) from Arabidopsis thaliana (Mouse-ear cress).